The chain runs to 897 residues: DNA polymerase I (897 aa).

The 317-residue stretch at 1-317 (MEQPVIKEGT…ILDNTPALDN (317 aa)) folds into the 5'-3' exonuclease domain. In terms of domain architecture, 3'-5' exonuclease spans 318 to 494 (APKKSRMIVL…RLCEYFEKGG (177 aa)). The tract at residues 498–896 (DLLTLARDIE…FIAKRWNELK (399 aa)) is polymerase.

This sequence belongs to the DNA polymerase type-A family. Single-chain monomer with multiple functions.

The catalysed reaction is DNA(n) + a 2'-deoxyribonucleoside 5'-triphosphate = DNA(n+1) + diphosphate. In terms of biological role, in addition to polymerase activity, this DNA polymerase exhibits 3'-5' and 5'-3' exonuclease activity. This chain is DNA polymerase I (polA), found in Helicobacter pylori (strain J99 / ATCC 700824) (Campylobacter pylori J99).